A 687-amino-acid chain; its full sequence is Putative metabolite transport protein YDL199C (687 aa).

Residues 1 to 22 (MKPPLNMSRSNKPLTQEANSSA) are disordered. Topologically, residues 1 to 122 (MKPPLNMSRS…RHSSRVLRTS (122 aa)) are extracellular. Positions 7-22 (MSRSNKPLTQEANSSA) are enriched in polar residues. Phosphoserine is present on Ser90. The chain crosses the membrane as a helical span at residues 123-143 (FISFVVLVSSLSGLDQGLISG). Residues 144 to 164 (NVMTLSFQKYFHYPLTSPLGN) are Cytoplasmic-facing. A helical transmembrane segment spans residues 165-185 (IVSIVNLGAFMASLFVYSGIL). Residues 186–192 (EPCSRKK) lie on the Extracellular side of the membrane. A helical transmembrane segment spans residues 193–213 (MLQISTMIYSLGAIVQVLALN). Residues 214–216 (QWC) are Cytoplasmic-facing. A helical membrane pass occupies residues 217-237 (LLLGRFLLGVGMGFAFSMVII). Topologically, residues 238–251 (YQFEFPLPCIRKRT) are extracellular. Residues 252 to 272 (LISIQCVSSVIAYSFGIWINC) form a helical membrane-spanning segment. The Cytoplasmic portion of the chain corresponds to 273–283 (AFRYLGFAWRY). A helical membrane pass occupies residues 284–304 (PLSTHVALGIILNLMSFYLIL). At 305 to 410 (ESPSWLLKQK…MGRGERKSIY (106 aa)) the chain is on the extracellular side. Residues 411–431 (LTGLNALIYSIVILAYVPLVL) traverse the membrane as a helical segment. At 432-439 (RKRKEKTN) the chain is on the cytoplasmic side. Residues 440-460 (VLLGSIVMCALLFTISFTDWF) form a helical membrane-spanning segment. The Extracellular portion of the chain corresponds to 461–469 (PKSTTRYIS). Residues 470-490 (ILFAVFLFTHFISWDSIGWVM) traverse the membrane as a helical segment. The Cytoplasmic segment spans residues 491–500 (TIELLPHLSQ). The chain crosses the membrane as a helical span at residues 501–521 (APVILLVSNFYWIFKWFVSLI). The Extracellular segment spans residues 522–533 (TPILIDRLSWKF). Residues 534-554 (YLIPSLSSFISIIFVLKIFPI) traverse the membrane as a helical segment. Over 555–687 (ETRDERLDSD…QNSPGDMAVA (133 aa)) the chain is Cytoplasmic. Disordered regions lie at residues 561 to 587 (LDSD…SEFS) and 654 to 687 (SFHN…MAVA). Residues 660-673 (DPNISDNIAANKPS) show a composition bias toward polar residues.

The protein belongs to the major facilitator superfamily. Sugar transporter (TC 2.A.1.1) family.

Its subcellular location is the membrane. The polypeptide is Putative metabolite transport protein YDL199C (Saccharomyces cerevisiae (strain ATCC 204508 / S288c) (Baker's yeast)).